Consider the following 131-residue polypeptide: Profilin-1 (131 aa).

Belongs to the profilin family. As to quaternary structure, occurs in many kinds of cells as a complex with monomeric actin in a 1:1 ratio. In terms of tissue distribution, cytoplasmic distribution in hypocotyls. In root nodules, it is found in all cells, but is more abundant in the vascular tissue as well as the endodermis.

It localises to the cytoplasm. It is found in the cytoskeleton. Functionally, binds to actin and affects the structure of the cytoskeleton. At high concentrations, profilin prevents the polymerization of actin, whereas it enhances it at low concentrations. By binding to PIP2, it inhibits the formation of IP3 and DG. This Phaseolus vulgaris (Kidney bean) protein is Profilin-1.